Consider the following 594-residue polypeptide: 3-hydroxy-3-methylglutaryl coenzyme A reductase 2-A (594 aa).

Residues 1-32 (MDVRRRPVKSLSSAKTATAGEPPKSQQQHPKA) form a disordered region. The Lumenal segment spans residues 1–37 (MDVRRRPVKSLSSAKTATAGEPPKSQQQHPKASDALP). A helical membrane pass occupies residues 38 to 58 (LPLYLTNGLFFTMFFSVMYFL). The Cytoplasmic segment spans residues 59-81 (LHRWREKIRNSTPLHVVTLSELA). The helical transmembrane segment at 82-102 (ALVLLMASVIYLLGFFGIGFV) threads the bilayer. The Lumenal portion of the chain corresponds to 103-549 (RSVIRPSPDA…SKESPGSNSR (447 aa)). The N-linked (GlcNAc...) asparagine glycan is linked to Asn261. Glu273 (charge relay system) is an active-site residue. An N-linked (GlcNAc...) asparagine glycan is attached at Asn337. Residues Lys405 and Asp481 each act as charge relay system in the active site. Residues 550–570 (LLASIVAGSVLAGELSLMSAL) form a helical membrane-spanning segment. The Cytoplasmic portion of the chain corresponds to 571 to 594 (AAGQLVKSHMKYNRSSKDITKLSS). Residue His579 is the Proton donor of the active site.

It belongs to the HMG-CoA reductase family. As to expression, mostly expressed in the petioles of seedlings, seedlings and roots, and, to a lower extent, in seeds, leaves, stems and flowers.

The protein localises to the endoplasmic reticulum membrane. It is found in the plastid. The protein resides in the chloroplast membrane. Its subcellular location is the peroxisome membrane. The enzyme catalyses (R)-mevalonate + 2 NADP(+) + CoA = (3S)-3-hydroxy-3-methylglutaryl-CoA + 2 NADPH + 2 H(+). Its pathway is metabolic intermediate biosynthesis; (R)-mevalonate biosynthesis; (R)-mevalonate from acetyl-CoA: step 3/3. With respect to regulation, competitive inhibition by mevinolin (Mev) is leading to a significant reduction of total ginsenoside in adventitious roots. Triggered by darkness. Functionally, catalyzes the synthesis of mevalonate, the specific precursor of all isoprenoid compounds present in plants. Component of the triterpene saponins (e.g. ginsenosides or panaxosides) and phytosterols biosynthetic pathways. The protein is 3-hydroxy-3-methylglutaryl coenzyme A reductase 2-A of Panax ginseng (Korean ginseng).